Here is a 111-residue protein sequence, read N- to C-terminus: Type III endosome membrane protein TEMP (111 aa).

Over 1-27 (MIGGNTTIISGAINASTEAPGLGTGGR) the chain is Extracellular. N-linked (GlcNAc...) asparagine glycosylation occurs at N5. A helical; Signal-anchor for type III membrane protein transmembrane segment spans residues 28 to 48 (AWPVLVGVVLGAVVLSILIAL). Residues 49-111 (AAKCHLCRRY…TTGSRDHFSL (63 aa)) lie on the Cytoplasmic side of the membrane. A disordered region spans residues 64-111 (HRPLSSAGGGNRPPVGEDEDDDGFIEDNYIQPGAGEMETTGSRDHFSL). Residues 79–88 (GEDEDDDGFI) show a composition bias toward acidic residues.

In terms of tissue distribution, expressed in stomach, kidney, large and small intestine and kidney.

Its subcellular location is the membrane. It is found in the early endosome. It localises to the recycling endosome. The protein resides in the cell membrane. Functionally, may be involved in membrane trafficking between endosomes and plasma membrane. The sequence is that of Type III endosome membrane protein TEMP from Mus musculus (Mouse).